The chain runs to 301 residues: Homoserine kinase (301 aa).

89 to 99 is an ATP binding site; that stretch reads KPGSGLGSSSA.

It belongs to the GHMP kinase family. Homoserine kinase subfamily.

The protein resides in the cytoplasm. The catalysed reaction is L-homoserine + ATP = O-phospho-L-homoserine + ADP + H(+). The protein operates within amino-acid biosynthesis; L-threonine biosynthesis; L-threonine from L-aspartate: step 4/5. Catalyzes the ATP-dependent phosphorylation of L-homoserine to L-homoserine phosphate. The protein is Homoserine kinase of Methanococcus maripaludis (strain DSM 14266 / JCM 13030 / NBRC 101832 / S2 / LL).